A 739-amino-acid chain; its full sequence is Poly(A) polymerase gamma (739 aa).

The residue at position 2 (Lys-2) is an N6-acetyllysine. Residue Ser-23 is modified to Phosphoserine. Residues 99-101 (FGS), Thr-108, 112-114 (DID), Asp-166, Lys-227, Tyr-236, and 245-246 (GV) contribute to the ATP site. The Mg(2+) site is built by Asp-112, Asp-114, and Asp-166. Residues 506–566 (KSLSDVSRSS…PTGEIERSSA (61 aa)) form a disordered region. Composition is skewed to polar residues over residues 509–531 (SDVS…TCLD) and 538–556 (SGTP…NPDS). A Phosphoserine modification is found at Ser-524. Phosphoserine is present on residues Ser-602 and Ser-651. A Phosphothreonine modification is found at Thr-657. A compositionally biased stretch (basic and acidic residues) spans 677–688 (SRAAEDRKRKPM). Residues 677–725 (SRAAEDRKRKPMDSIGGESMPIPTIDTARKKRLPSKELPDSSSPVPANN) are disordered. Ser-711 is modified (phosphoserine).

This sequence belongs to the poly(A) polymerase family. The cofactor is Mg(2+). Mn(2+) serves as cofactor.

It is found in the nucleus. It carries out the reaction RNA(n) + ATP = RNA(n)-3'-adenine ribonucleotide + diphosphate. Responsible for the post-transcriptional adenylation of the 3'-terminal of mRNA precursors and several small RNAs including signal recognition particle (SRP) RNA, nuclear 7SK RNA, U2 small nuclear RNA, and ribosomal 5S RNA. The sequence is that of Poly(A) polymerase gamma (Papolg) from Mus musculus (Mouse).